We begin with the raw amino-acid sequence, 341 residues long: MKDVALQLKNVGKSYGNKVVLESIDFEVRHGSMVALLGTSGAGKSTLFRCLTGLEPIDSGSIVALGESIHELSPARLRAVRGQIGFVFQQLHLVKRFSALENVLGARLAEMPIWRVTLKSFSRADKVLAFECLDRVGMLDYANTPTQLLSGGQQQRIAIARALAQKPKIIIADEPVSSLDPLTARSVLQTLKAAATDLNVAVLCSLHQVDLAREFGDRIVGMRDGRVVFDGTPAEFTDERVHALYQVPAGKMHQRPRATRSTRWPVWLWHEGRSDDHIHTPHTRAAPGHRTALAPERALQRQTSAGADRRHGAVVRDRTTHRNGPHGGHDGTGRGQDRGPG.

One can recognise an ABC transporter domain in the interval 6–249 (LQLKNVGKSY…RVHALYQVPA (244 aa)). Residue 38–45 (GTSGAGKS) coordinates ATP. Positions 278–341 (IHTPHTRAAP…TGRGQDRGPG (64 aa)) are disordered. Composition is skewed to basic and acidic residues over residues 307–320 (ADRR…DRTT) and 327–341 (GGHD…RGPG).

The protein belongs to the ABC transporter superfamily. Phosphonates importer (TC 3.A.1.9.1) family. As to quaternary structure, the complex is composed of two ATP-binding proteins (HtxD), two transmembrane proteins (HtxC and HtxE) and a solute-binding protein (HtxB).

Its subcellular location is the cell inner membrane. It catalyses the reaction phosphinate(out) + ATP + H2O = phosphinate(in) + ADP + phosphate + H(+). Part of the ABC transporter complex HtxBCDE involved in hypophosphite import. Responsible for energy coupling to the transport system. In Stutzerimonas stutzeri (Pseudomonas stutzeri), this protein is Hypophosphite import ATP-binding protein HtxD (htxD).